The chain runs to 365 residues: Aminomethyltransferase (365 aa).

This sequence belongs to the GcvT family. The glycine cleavage system is composed of four proteins: P, T, L and H.

It carries out the reaction N(6)-[(R)-S(8)-aminomethyldihydrolipoyl]-L-lysyl-[protein] + (6S)-5,6,7,8-tetrahydrofolate = N(6)-[(R)-dihydrolipoyl]-L-lysyl-[protein] + (6R)-5,10-methylene-5,6,7,8-tetrahydrofolate + NH4(+). Functionally, the glycine cleavage system catalyzes the degradation of glycine. The sequence is that of Aminomethyltransferase from Yersinia pestis bv. Antiqua (strain Antiqua).